A 373-amino-acid polypeptide reads, in one-letter code: Chaperone protein DnaJ (373 aa).

Positions 5-69 (DYYEVLGVNK…NKRANYDQFG (65 aa)) constitute a J domain. The segment at 130-212 (GTKKEISIKK…CKGKGTENKT (83 aa)) adopts a CR-type zinc-finger fold. Positions 143, 146, 160, 163, 186, 189, 200, and 203 each coordinate Zn(2+). CXXCXGXG motif repeat units follow at residues 143-150 (CHTCNGDG), 160-167 (CSYCNGAG), 186-193 (CPKCEGSG), and 200-207 (CPTCKGKG).

It belongs to the DnaJ family. As to quaternary structure, homodimer. Zn(2+) serves as cofactor.

The protein localises to the cytoplasm. Participates actively in the response to hyperosmotic and heat shock by preventing the aggregation of stress-denatured proteins and by disaggregating proteins, also in an autonomous, DnaK-independent fashion. Unfolded proteins bind initially to DnaJ; upon interaction with the DnaJ-bound protein, DnaK hydrolyzes its bound ATP, resulting in the formation of a stable complex. GrpE releases ADP from DnaK; ATP binding to DnaK triggers the release of the substrate protein, thus completing the reaction cycle. Several rounds of ATP-dependent interactions between DnaJ, DnaK and GrpE are required for fully efficient folding. Also involved, together with DnaK and GrpE, in the DNA replication of plasmids through activation of initiation proteins. In Staphylococcus epidermidis (strain ATCC 12228 / FDA PCI 1200), this protein is Chaperone protein DnaJ.